The following is a 221-amino-acid chain: Ribonuclease 3 (221 aa).

In terms of domain architecture, RNase III spans 4-121; it reads LEQLEKKLGY…LWAAVYIDSG (118 aa). Glu40 serves as a coordination point for Mg(2+). Residue Asp44 is part of the active site. Residues Asp107 and Glu110 each coordinate Mg(2+). Glu110 is a catalytic residue. The region spanning 151–219 is the DRBM domain; it reads DYKTILQEIT…AEELIKLLEE (69 aa).

The protein belongs to the ribonuclease III family. Homodimer. The cofactor is Mg(2+).

The protein localises to the cytoplasm. The enzyme catalyses Endonucleolytic cleavage to 5'-phosphomonoester.. Functionally, digests double-stranded RNA. Involved in the processing of primary rRNA transcript to yield the immediate precursors to the large and small rRNAs (23S and 16S). Also processes some mRNAs, and tRNAs when they are encoded in the rRNA operon. Probably processes pre-crRNA and tracrRNA of type II CRISPR loci if present in the organism. This chain is Ribonuclease 3 (rnc), found in Aquifex aeolicus (strain VF5).